Consider the following 535-residue polypeptide: Intercellular adhesion molecule 1 (535 aa).

The signal sequence occupies residues 1 to 27 (MALGAAPAAQLALLALLGTLLPGPGGA). Residues 28–480 (GISIHPSKAI…LNVLHGQNIL (453 aa)) lie on the Extracellular side of the membrane. In terms of domain architecture, Ig-like C2-type 1 spans 41-102 (GDSLTVNCSN…SNCHKEQTIA (62 aa)). N-linked (GlcNAc...) asparagine glycosylation occurs at Asn47. Disulfide bonds link Cys48-Cys91 and Cys52-Cys95. Asn105 and Asn131 each carry an N-linked (GlcNAc...) asparagine glycan. The 67-residue stretch at 127–193 (GEELNLSCLV…FSCRWELDLR (67 aa)) folds into the Ig-like C2-type 2 domain. A disulfide bridge connects residues Cys134 and Cys186. The Cell attachment site; atypical motif lies at 151–153 (RGE). 10 N-linked (GlcNAc...) asparagine glycosylation sites follow: Asn183, Asn202, Asn236, Asn262, Asn302, Asn341, Asn357, Asn366, Asn404, and Asn428. Positions 230–295 (GSRWPVNCTL…LKCSVTLGEV (66 aa)) constitute an Ig-like C2-type 3 domain. Cys237 and Cys288 form a disulfide bridge. Residues 323–376 (WTTVTVECVTRDGAVVKLNGTSAVPPGPRAQLKLNASASDHRSNFSCSAALEIA) enclose the Ig-like C2-type 4 domain. Intrachain disulfides connect Cys330–Cys369, Cys401–Cys417, Cys417–Cys456, and Cys429–Cys456. Positions 410–463 (GSEQTLKCEAQGNPIPKLNCSRKGDGASLPIGDLRPVRREVAGTYLCRATSARG) constitute an Ig-like C2-type 5 domain. The chain crosses the membrane as a helical span at residues 481 to 503 (DIVIPVVAVTLILGALGTAGYVY). The Cytoplasmic segment spans residues 504 to 535 (NYQRKIQKYELQKARKAQEEAALKLNAQSTPP). Thr533 is modified (phosphothreonine).

The protein belongs to the immunoglobulin superfamily. ICAM family. Homodimer. Interacts with MUC1 and promotes cell aggregation in epithelial cells. Interacts with ARHGEF26/SGEF. Interacts (on T cell side) with CD81, CD247 and CD9 at immunological synapses between antigen-presenting cells and T cells. In terms of processing, monoubiquitinated, which is promoted by MARCH9 and leads to endocytosis.

It localises to the membrane. ICAM proteins are ligands for the leukocyte adhesion protein LFA-1 (integrin alpha-L/beta-2). During leukocyte trans-endothelial migration, ICAM1 engagement promotes the assembly of endothelial apical cups through ARHGEF26/SGEF and RHOG activation. The sequence is that of Intercellular adhesion molecule 1 (ICAM1) from Bos taurus (Bovine).